The following is a 105-amino-acid chain: Small ribosomal subunit protein eS24 (105 aa).

Positions 86–105 (LERNKIEADEEADEEAAEEA) are disordered. Residues 93–105 (ADEEADEEAAEEA) are compositionally biased toward acidic residues.

It belongs to the eukaryotic ribosomal protein eS24 family.

The chain is Small ribosomal subunit protein eS24 from Natronomonas pharaonis (strain ATCC 35678 / DSM 2160 / CIP 103997 / JCM 8858 / NBRC 14720 / NCIMB 2260 / Gabara) (Halobacterium pharaonis).